A 123-amino-acid polypeptide reads, in one-letter code: Defensin beta 118 (123 aa).

The first 19 residues, 1–19 (MKLLLLALPVLVLLPQVIP), serve as a signal peptide directing secretion. 3 disulfide bridges follow: cysteine 27-cysteine 54, cysteine 34-cysteine 48, and cysteine 38-cysteine 55. A propeptide spanning residues 65–123 (VPMTSPTPLSDSTPGIIDDILTVRFTTDYFEVSSKKDMVEESEAGRGTETSLPNVHHSS) is cleaved from the precursor. A compositionally biased stretch (basic and acidic residues) spans 100–110 (KDMVEESEAGR). The interval 100–123 (KDMVEESEAGRGTETSLPNVHHSS) is disordered. Over residues 112-123 (TETSLPNVHHSS) the composition is skewed to polar residues.

It belongs to the beta-defensin family. Post-translationally, the three-dimensional structure formed by the three intramolecular disulfide bridges is indispensable for antimicrobial activity.

It is found in the secreted. Host defense peptide that exhibits antimicrobial activity against both Gram-negative bacteria, such as E.coli and S.typhimurium, and Gram-positive bacteria, such as S.aureus and B.subtilis. Inhibits cell adhesion of E.coli on intestinal epithelial enterocytes. Causes rapid permeabilization of both the outer and inner membrane of E.coli, leading to morphological alterations on the bacterial surface. Binds to bacterial lipopolysaccharides (LPS) with high affinity, and may thereby be involved in immunoregulation through LPS neutralization. May contribute to epididymal innate immunity and protect the sperm against attack by microorganisms. The chain is Defensin beta 118 (DEFB118) from Pan troglodytes (Chimpanzee).